Here is a 91-residue protein sequence, read N- to C-terminus: Small ribosomal subunit protein bS18 (91 aa).

Belongs to the bacterial ribosomal protein bS18 family. As to quaternary structure, part of the 30S ribosomal subunit. Forms a tight heterodimer with protein bS6.

Functionally, binds as a heterodimer with protein bS6 to the central domain of the 16S rRNA, where it helps stabilize the platform of the 30S subunit. This is Small ribosomal subunit protein bS18 from Paraburkholderia xenovorans (strain LB400).